We begin with the raw amino-acid sequence, 175 residues long: Capsid protein (175 aa).

Positions 1 to 35 (MFRQEMARYPKKSIKKRRVGRRKYGSKAATSHDYS) are disordered. Over residues 9-25 (YPKKSIKKRRVGRRKYG) the composition is skewed to basic residues.

It belongs to the nanoviridae capsid protein family.

Its subcellular location is the virion. The polypeptide is Capsid protein (DNA-S) (Musa (BBTV)).